The sequence spans 209 residues: Transmembrane protein 52 (209 aa).

The signal sequence occupies residues 1–32; the sequence is MARGPLAARGLRLLLPLLPLLPLLPLPQVALG. Residues 56–76 form a helical membrane-spanning segment; sequence VGLILLAVLLLLLCGVTAGCV. The interval 145–209 is disordered; the sequence is AYSLYTPEPP…QLPPCSPGAP (65 aa). The span at 159–170 shows a compositional bias: basic and acidic residues; that stretch reads EAVKMAKPREEG. The segment covering 186 to 202 has biased composition (polar residues); the sequence is LETTPVPQESGPNTQLP.

The protein localises to the membrane. The sequence is that of Transmembrane protein 52 (TMEM52) from Homo sapiens (Human).